A 396-amino-acid polypeptide reads, in one-letter code: Elongation factor Tu (396 aa).

The 196-residue stretch at 10 to 205 (KPHVNIGTIG…AVDESIPDPV (196 aa)) folds into the tr-type G domain. A G1 region spans residues 19 to 26 (GHVDHGKT). Position 19-26 (19-26 (GHVDHGKT)) interacts with GTP. Position 26 (T26) interacts with Mg(2+). A G2 region spans residues 62 to 66 (GITIN). The interval 83 to 86 (DAPG) is G3. Residues 83–87 (DAPGH) and 138–141 (NKSD) each bind GTP. The tract at residues 138 to 141 (NKSD) is G4. Residues 175-177 (SAL) form a G5 region.

Belongs to the TRAFAC class translation factor GTPase superfamily. Classic translation factor GTPase family. EF-Tu/EF-1A subfamily. In terms of assembly, monomer.

It is found in the cytoplasm. It carries out the reaction GTP + H2O = GDP + phosphate + H(+). GTP hydrolase that promotes the GTP-dependent binding of aminoacyl-tRNA to the A-site of ribosomes during protein biosynthesis. The chain is Elongation factor Tu from Mycobacterium marinum (strain ATCC BAA-535 / M).